The chain runs to 273 residues: Undecaprenyl-diphosphatase (273 aa).

6 helical membrane passes run 46 to 63 (LFEV…CWEY), 83 to 103 (FVLN…LAGK), 109 to 129 (LFNS…ILWV), 184 to 204 (ATEF…AYDL), 218 to 238 (AFGI…RGLL), and 249 to 269 (FAWY…YGLV).

It belongs to the UppP family.

The protein resides in the cell inner membrane. It catalyses the reaction di-trans,octa-cis-undecaprenyl diphosphate + H2O = di-trans,octa-cis-undecaprenyl phosphate + phosphate + H(+). Its function is as follows. Catalyzes the dephosphorylation of undecaprenyl diphosphate (UPP). Confers resistance to bacitracin. The protein is Undecaprenyl-diphosphatase of Methylococcus capsulatus (strain ATCC 33009 / NCIMB 11132 / Bath).